Consider the following 451-residue polypeptide: Trigger factor (451 aa).

The PPIase FKBP-type domain maps to 165-250 (DDKLTIDFEG…LHQIQAREAL (86 aa)).

Belongs to the FKBP-type PPIase family. Tig subfamily.

The protein resides in the cytoplasm. It catalyses the reaction [protein]-peptidylproline (omega=180) = [protein]-peptidylproline (omega=0). In terms of biological role, involved in protein export. Acts as a chaperone by maintaining the newly synthesized protein in an open conformation. Functions as a peptidyl-prolyl cis-trans isomerase. This is Trigger factor from Helicobacter pylori (strain G27).